The sequence spans 858 residues: Phospholipase D gamma 1 (858 aa).

A C2 domain is found at 27 to 163 (PFATSSGSLR…CSGNRIEGLF (137 aa)). D225 is a Ca(2+) binding site. The 36-residue stretch at 364–399 (TIYTHHQKTVIVDAEAAQNRRKIVAFVGGLDLCNGR) folds into the PLD phosphodiesterase 1 domain. Active-site residues include H369, K371, and D376. Position 369 (H369) interacts with a 1,2-diacyl-sn-glycero-3-phosphate. 2 residues coordinate Ca(2+): H405 and H437. Q565 contacts a 1,2-diacyl-sn-glycero-3-phosphate. S680 carries the post-translational modification Phosphoserine. In terms of domain architecture, PLD phosphodiesterase 2 spans 704 to 731 (FMIYVHSKGMVVDDEFVLIGSANINQRS). Active-site residues include H709, K711, and D716. H709 contacts a 1,2-diacyl-sn-glycero-3-phosphate. Residue E772 participates in Ca(2+) binding.

This sequence belongs to the phospholipase D family. C2-PLD subfamily. Ca(2+) is required as a cofactor. In terms of tissue distribution, highly expressed in roots and flowers, moderately in stems, leaves and seedlings and low in siliques. Not detected in seeds.

It is found in the cytoplasm. The protein localises to the membrane. It carries out the reaction a 1,2-diacyl-sn-glycero-3-phosphocholine + H2O = a 1,2-diacyl-sn-glycero-3-phosphate + choline + H(+). Inhibited by neomycin. Up-regulated by PIP2 binding. Its function is as follows. Hydrolyzes glycerol-phospholipids at the terminal phosphodiesteric bond to generate phosphatidic acids (PA). Plays an important role in various cellular processes, including phytohormone action, vesicular trafficking, secretion, cytoskeletal arrangement, meiosis, tumor promotion, pathogenesis, membrane deterioration and senescence. Can use phosphatidylserine (PS) and phosphatidylethanolamine (PE) as substrates only in the presence of PIP2. Can use phosphatidylcholine (PC), phosphatidylglycerol (PG) or N-acylphosphatidylethanolamine (NAPE) as substrates in the presence of PE and PIP2. Involved in membrane lipid modulation under aluminum (Al) stress and negatively modulate plant tolerance to Al. The protein is Phospholipase D gamma 1 of Arabidopsis thaliana (Mouse-ear cress).